Here is a 456-residue protein sequence, read N- to C-terminus: Putative gluconeogenesis factor (456 aa).

This sequence belongs to the gluconeogenesis factor family.

It localises to the cytoplasm. Its function is as follows. Required for morphogenesis under gluconeogenic growth conditions. In Nostoc sp. (strain PCC 7120 / SAG 25.82 / UTEX 2576), this protein is Putative gluconeogenesis factor.